We begin with the raw amino-acid sequence, 88 residues long: Small ribosomal subunit protein bS20 (88 aa).

Residues 1–27 (MANTPQAKKRARQNEKARKHNASMRSM) form a disordered region. The segment covering 7–22 (AKKRARQNEKARKHNA) has biased composition (basic residues).

It belongs to the bacterial ribosomal protein bS20 family.

Binds directly to 16S ribosomal RNA. The chain is Small ribosomal subunit protein bS20 from Cellvibrio japonicus (strain Ueda107) (Pseudomonas fluorescens subsp. cellulosa).